The following is a 274-amino-acid chain: MGIVIAVYGKGGIGKSTNSANLSTALAMKGASVLQIGCDPKHDSTFPITGHLQKTVIEVLEEVGFHHEEVMFEDVVKKGFANVDAIEAGGPPAGSGCGGYVVGETVKLLQEFGVYDKYDVILFDVLGDVVCGGFSAPLNYADYALIVATNDFDSIFAANRLCMAIEQKSARSKVQLAGIIGNKVDYVNGGGTNVLDKFADKVNTKVVAKVPMHDLIRRSRLAGKTLFQMEEDGQDVCIAPYLALAEQLLSEKPFATVPKSLGDREIFELMGGWM.

Residues 12-17 (GIGKST) and K41 contribute to the ATP site. A Mg(2+)-binding site is contributed by S16. Residues C97 and C131 each coordinate [4Fe-4S] cluster.

The protein belongs to the NifH/BchL/ChlL family. Homodimer. Protochlorophyllide reductase is composed of three subunits; BchL, BchN and BchB. It depends on [4Fe-4S] cluster as a cofactor.

It carries out the reaction chlorophyllide a + oxidized 2[4Fe-4S]-[ferredoxin] + 2 ADP + 2 phosphate = protochlorophyllide a + reduced 2[4Fe-4S]-[ferredoxin] + 2 ATP + 2 H2O. The protein operates within porphyrin-containing compound metabolism; bacteriochlorophyll biosynthesis (light-independent). In terms of biological role, component of the dark-operative protochlorophyllide reductase (DPOR) that uses Mg-ATP and reduced ferredoxin to reduce ring D of protochlorophyllide (Pchlide) to form chlorophyllide a (Chlide). This reaction is light-independent. The L component serves as a unique electron donor to the NB-component of the complex, and binds Mg-ATP. The chain is Light-independent protochlorophyllide reductase iron-sulfur ATP-binding protein from Chloroherpeton thalassium (strain ATCC 35110 / GB-78).